The chain runs to 354 residues: Magnesium-protoporphyrin IX monomethyl ester [oxidative] cyclase 2 (354 aa).

It belongs to the AcsF family. It depends on Fe cation as a cofactor.

It carries out the reaction Mg-protoporphyrin IX 13-monomethyl ester + 3 NADPH + 3 O2 + 2 H(+) = 3,8-divinyl protochlorophyllide a + 3 NADP(+) + 5 H2O. Its pathway is porphyrin-containing compound metabolism; chlorophyll biosynthesis (light-independent). In terms of biological role, catalyzes the formation of the isocyclic ring in chlorophyll biosynthesis. Mediates the cyclase reaction, which results in the formation of divinylprotochlorophyllide (Pchlide) characteristic of all chlorophylls from magnesium-protoporphyrin IX 13-monomethyl ester (MgPMME). This Thermosynechococcus vestitus (strain NIES-2133 / IAM M-273 / BP-1) protein is Magnesium-protoporphyrin IX monomethyl ester [oxidative] cyclase 2.